Here is a 37-residue protein sequence, read N- to C-terminus: Large ribosomal subunit protein bL36 (37 aa).

This sequence belongs to the bacterial ribosomal protein bL36 family.

The polypeptide is Large ribosomal subunit protein bL36 (Helicobacter pylori (strain HPAG1)).